The primary structure comprises 603 residues: Baeyer-Villiger monooxygenase (603 aa).

FAD-binding positions include Glu-94, 102 to 105 (TWYW), Asp-114, Tyr-120, and Val-164. Residue 112-114 (HCD) participates in NADP(+) binding. Residues 248 to 254 (TGATGVQ), 271 to 272 (RT), and 386 to 387 (KR) contribute to the NADP(+) site.

Belongs to the FAD-binding monooxygenase family. The cofactor is FAD.

Catalyzes a Baeyer-Villiger oxidation reaction, i.e. the insertion of an oxygen atom into a carbon-carbon bond adjacent to a carbonyl, which converts ketones to esters or lactones using NADPH and/or NADH as an electron donor. Thus, can convert bicyclo[3.2.0]hept-2-en-6-one into the oxidative lactone products 2-oxabicyclo[3.3.0]oct-6-en-3-one and 3-oxabicyclo[3.3.0]oct-6-en-2-one. Is also able to catalyze the sulfoxidation of methyl phenyl sulfide (thioanisole). In Streptomyces coelicolor (strain ATCC BAA-471 / A3(2) / M145), this protein is Baeyer-Villiger monooxygenase.